Here is a 172-residue protein sequence, read N- to C-terminus: Austinoid biosynthesis clusters protein J (172 aa).

This sequence belongs to the trt14 isomerase family. As to quaternary structure, homodimer.

It participates in secondary metabolite biosynthesis; terpenoid biosynthesis. Functionally, part of the gene cluster B that mediates the biosynthesis of the fungal meroterpenoid acetoxydehydroaustin. The first step of the pathway is the synthesis of 3,5-dimethylorsellinic acid by the polyketide synthase ausA. 3,5-dimethylorsellinic acid is then prenylated by the polyprenyl transferase ausN. Further epoxidation by the FAD-dependent monooxygenase ausM and cyclization by the probable terpene cyclase ausL lead to the formation of protoaustinoid A. Protoaustinoid A is then oxidized to spiro-lactone preaustinoid A3 by the combined action of the FAD-binding monooxygenases ausB and ausC, and the dioxygenase ausE. Acid-catalyzed keto-rearrangement and ring contraction of the tetraketide portion of preaustinoid A3 by ausJ lead to the formation of preaustinoid A4. The aldo-keto reductase ausK, with the help of ausH, is involved in the next step by transforming preaustinoid A4 into isoaustinone which is in turn hydroxylated by the P450 monooxygenase ausI to form austinolide. The cytochrome P450 monooxygenase ausG then modifies austinolide to austinol. Austinol is further acetylated to austin by the O-acetyltransferase ausP, which spontaneously changes to dehydroaustin. The cytochrome P450 monooxygenase then converts dehydroaustin is into 7-dehydrodehydroaustin. The hydroxylation catalyzed by ausR permits the second O-acetyltransferase ausQ to add an additional acetyl group to the molecule, leading to the formation of acetoxydehydroaustin. Due to genetic rearrangements of the clusters and the subsequent loss of some enzymes, the end product of the Penicillium brasilianum austinoid biosynthesis clusters is acetoxydehydroaustin. This is Austinoid biosynthesis clusters protein J from Penicillium brasilianum.